The following is a 1234-amino-acid chain: Chromosome-associated kinesin KIF4B (1234 aa).

The 328-residue stretch at 9-336 (PVRVALRCRP…LRYADRARKI (328 aa)) folds into the Kinesin motor domain. ATP is bound at residue 88–95 (GQTGSGKT). A coiled-coil region spans residues 350–999 (ELNHLKQQVQ…IKQKLILLQV (650 aa)). Serine 394 carries the post-translational modification Phosphoserine. Disordered stretches follow at residues 494-513 (EEAQVETSPETSRSSDAFTT) and 712-737 (KRLKDALQKQREVTDKRKETQSHGKE). Positions 498 to 513 (VETSPETSRSSDAFTT) are enriched in polar residues. Residues 663-1234 (QWKQKKDKEV…GCSPIEEEAH (572 aa)) are interaction with PRC1. Positions 713 to 737 (RLKDALQKQREVTDKRKETQSHGKE) are enriched in basic and acidic residues. A Nuclear localization signal motif is present at residues 793–798 (PKLRKC). Threonine 799 bears the Phosphothreonine mark. Residues serine 801, serine 951, serine 1001, serine 1013, serine 1017, and serine 1028 each carry the phosphoserine modification. A globular region spans residues 1000–1234 (ASRQKHLPND…GCSPIEEEAH (235 aa)). 4 disordered regions span residues 1007–1030 (PNDTLLSPDSSFEYIPPKPKPSRV), 1052–1076 (VNEHEDGDGDGDSDEGDDEEWKPTK), 1122–1143 (RQQGKDSLGTVEQTQDSEGSFK), and 1183–1234 (TAPA…EEAH). Acidic residues predominate over residues 1056–1071 (EDGDGDGDSDEGDDEE). The CRD; required for [4Fe-4S] cluster binding and localization to the spindle midzone and midbody during anaphase and telophase stretch occupies residues 1086 to 1144 (QGCSCKGWCGNKQCGCRKQKSDCGVDCSCDPTKCRNRQQGKDSLGTVEQTQDSEGSFKL). Serine 1128 is subject to Phosphoserine. A Phosphothreonine modification is found at threonine 1183. Position 1188 is a phosphoserine (serine 1188). Residue lysine 1196 forms a Glycyl lysine isopeptide (Lys-Gly) (interchain with G-Cter in SUMO2) linkage. At serine 1227 the chain carries Phosphoserine.

It belongs to the TRAFAC class myosin-kinesin ATPase superfamily. Kinesin family. Chromokinesin subfamily. It depends on [2Fe-2S] cluster as a cofactor. Requires [4Fe-4S] cluster as cofactor. Specifically expressed in testis.

Its subcellular location is the nucleus matrix. It localises to the cytoplasm. The protein resides in the cytoskeleton. Iron-sulfur (Fe-S) cluster binding motor protein that has a role in chromosome segregation during mitosis. Translocates PRC1 to the plus ends of interdigitating spindle microtubules during the metaphase to anaphase transition, an essential step for the formation of an organized central spindle midzone and midbody and for successful cytokinesis. May play a role in mitotic chromosomal positioning and bipolar spindle stabilization. The sequence is that of Chromosome-associated kinesin KIF4B (KIF4B) from Homo sapiens (Human).